A 2211-amino-acid polypeptide reads, in one-letter code: Norsolorinic acid synthase stcA (2211 aa).

The interval 11–251 (FLFGDQTYDF…REIPIYVPAH (241 aa)) is starter unit:ACP transacylase (SAT) domain. The disordered stretch occupies residues 358–378 (PAEPPTSINKTPERYSHRPGS). Positions 368–378 (TPERYSHRPGS) are enriched in basic and acidic residues. In terms of domain architecture, Ketosynthase family 3 (KS3) spans 380 to 812 (RGKLAIVSMS…GGNTAVLVED (433 aa)). Active-site for beta-ketoacyl synthase activity residues include Cys-552, His-687, and His-730. The tract at residues 912 to 1201 (IACSGQGSQY…MAGMIKTTLD (290 aa)) is malonyl-CoA:ACP transacylase (MAT) domain. Residue Ser-1004 is the For acyl/malonyl transferase activity of the active site. A disordered region spans residues 1289 to 1316 (TATSDYQLPSDEQVAAKRPSKQDESKEA). Residues 1327–1468 (HRVVEEKTEP…CTVRFTSEAQ (142 aa)) form an N-terminal hotdog fold region. Positions 1327–1643 (HRVVEEKTEP…LRRVPRRGLR (317 aa)) constitute a PKS/mFAS DH domain. The tract at residues 1340–1643 (TLVVETDISR…LRRVPRRGLR (304 aa)) is product template (PT) domain. Catalysis depends on His-1359, which acts as the Proton acceptor; for dehydratase activity. Residues 1495 to 1643 (FIRYTTKSGY…LRRVPRRGLR (149 aa)) form a C-terminal hotdog fold region. Residue Asp-1555 is the Proton donor; for dehydratase activity of the active site. The disordered stretch occupies residues 1655–1706 (RLHGNQQAVKTQAPQRAALKQKPQSSPTQPHASKVAYSRSATSPTAGKPVVA). 2 stretches are compositionally biased toward polar residues: residues 1658-1668 (GNQQAVKTQAP) and 1676-1685 (KPQSSPTQPH). Carrier domains follow at residues 1712-1791 (REGD…SGSA) and 1839-1915 (DELF…GTTS). O-(pantetheine 4'-phosphoryl)serine occurs at positions 1749 and 1873. Residues 1912–1926 (GTTSGSTTGSSGSGS) are compositionally biased toward low complexity. Residues 1912–1947 (GTTSGSTTGSSGSGSSEDETDSIPSTPEEYTTADTR) are disordered. Positions 1934 to 1945 (IPSTPEEYTTAD) are enriched in polar residues. Positions 1969-2205 (ILFMLPDGGG…KEHVYLVREL (237 aa)) are thioesterase/Claisen cyclase (TE/CLC) domain. Ser-2039 (for thioesterase activity) is an active-site residue.

Requires pantetheine 4'-phosphate as cofactor.

It catalyses the reaction hexanoyl-[ACP] + 7 malonyl-CoA + 6 H(+) = noranthrone + holo-[ACP] + 7 CO2 + 7 CoA + 2 H2O. The protein operates within mycotoxin biosynthesis; sterigmatocystin biosynthesis. Functionally, non-reducing polyketide synthase; part of the gene cluster that mediates the biosynthesis of sterigmatocystin (ST), a polyketide-derived furanocoumarin which is part of the most toxic and carcinogenic compounds among the known mycotoxins. The first step in the biosynthesis of sterigmatocystin is the production of hexanoate by the fatty acid synthase (FAS) units stcJ and stcK. The polyketide backbone is assembled by the non-reducing polyketide synthase stcA by condensation of the starter hexanoyl-CoA and 7 malonyl-CoA extender units followed by cyclization and release of norsolorinic acid. Norsolorinic acid is the first stable intermediate in the biosynthesis of sterigmatocystin and is converted into averantin (AVN) by the ketoreductase stcE which reduces the hexanoate ketone to an alcohol. Averantin is then oxidized into 5'-hydroxyaverantin (HAVN) by the cytochrome P450 monooxygenase stcF. 5'-hydroxyaverantin is further converted to 5'-oxyaverantin (OAVN) by the 5'-hydroxyaverantin dehydrogenase stcG. The next step is the conversion of OAVN into averufin (AVF) which is catalyzed by a yet to be identified enzyme. The cytochrome P450 monooxygenase stcB and the flavin-binding monooxygenase stcW are both required for the conversion of averufin to 1-hydroxyversicolorone. The esterase stcI probably catalyzes the formation of versiconal hemiacetal acetate from 1-hydroxyversicolorone. The oxydoreductase stcN then probably catalyzes the biosynthetic step from versiconal to versicolorin B (VERB). The next step is performed by the versicolorin B desaturase stcL to produce versicolorin A (VERA). The ketoreductase stcU and the cytochrome P450 monooxygenase stcS are involved in the conversion of versicolorin A to demethylsterigmatocystin. The Baeyer-Villiger oxidas stcQ and the reductase stcR might be involved in the biosynthetic step from versicolorin A to demethylsterigmatocystin. The final step in the biosynthesis of sterigmatocystin is the methylation of demethylsterigmatocystin catalyzed by the methyltransferase stcP. The sequence is that of Norsolorinic acid synthase stcA from Emericella nidulans (strain FGSC A4 / ATCC 38163 / CBS 112.46 / NRRL 194 / M139) (Aspergillus nidulans).